Here is a 434-residue protein sequence, read N- to C-terminus: Ribitol-5-phosphate xylosyltransferase 1 (434 aa).

The Cytoplasmic portion of the chain corresponds to 1 to 7 (MRFFRRK). Residues 8 to 28 (IAIIVILAYAIFSLYAAYNVF) traverse the membrane as a helical; Signal-anchor for type II membrane protein segment. Residues 29–434 (FSKRVISRVH…VLEENFFKIT (406 aa)) lie on the Extracellular side of the membrane.

The protein belongs to the TMEM5 family.

It localises to the golgi apparatus membrane. It catalyses the reaction 3-O-[Rib-ol-P-Rib-ol-P-3-beta-D-GalNAc-(1-&gt;3)-beta-D-GlcNAc-(1-&gt;4)-(O-6-P-alpha-D-Man)]-Thr-[protein] + UDP-alpha-D-xylose = 3-O-[beta-D-Xyl-(1-&gt;4)-Rib-ol-P-Rib-ol-P-3-beta-D-GalNAc-(1-&gt;3)-beta-D-GlcNAc-(1-&gt;4)-(O-6-P-alpha-D-Man)]-Thr-[protein] + UDP + H(+). The protein operates within protein modification; protein glycosylation. Its function is as follows. Acts as a UDP-D-xylose:ribitol-5-phosphate beta1,4-xylosyltransferase, which catalyzes the transfer of UDP-D-xylose to ribitol 5-phosphate (Rbo5P) to form the Xylbeta1-4Rbo5P linkage on O-mannosyl glycan. Participates in the biosynthesis of the phosphorylated O-mannosyl trisaccharide (N-acetylgalactosamine-beta-3-N-acetylglucosamine-beta-4-(phosphate-6-)mannose), a carbohydrate structure present in alpha-dystroglycan (DAG1), which is required for binding laminin G-like domain-containing extracellular proteins with high affinity. This chain is Ribitol-5-phosphate xylosyltransferase 1 (rxylt1), found in Danio rerio (Zebrafish).